Here is a 348-residue protein sequence, read N- to C-terminus: Galactose-1-phosphate uridylyltransferase (348 aa).

28 to 31 contributes to the UDP-alpha-D-glucose binding site; it reads RAKR. Positions 52 and 55 each coordinate Zn(2+). UDP-alpha-D-glucose is bound by residues valine 61 and 77–78; that span reads ND. Position 115 (histidine 115) interacts with Zn(2+). UDP-alpha-D-glucose contacts are provided by residues asparagine 153 and 159 to 161; that span reads GCS. Histidine 164 lines the Zn(2+) pocket. The Tele-UMP-histidine intermediate role is filled by histidine 166. Glutamine 168 contributes to the UDP-alpha-D-glucose binding site. Positions 182, 281, 296, and 298 each coordinate Fe cation. UDP-alpha-D-glucose is bound by residues 311–312, 316–317, and glutamine 323; these read KF and YE.

Belongs to the galactose-1-phosphate uridylyltransferase type 1 family. Requires Zn(2+) as cofactor.

It carries out the reaction alpha-D-galactose 1-phosphate + UDP-alpha-D-glucose = alpha-D-glucose 1-phosphate + UDP-alpha-D-galactose. It functions in the pathway carbohydrate metabolism; galactose metabolism. The sequence is that of Galactose-1-phosphate uridylyltransferase (galT) from Salmonella typhimurium (strain LT2 / SGSC1412 / ATCC 700720).